The primary structure comprises 338 residues: mRNA decay activator protein ZFP36L1 (338 aa).

The necessary and sufficient for the association with mRNA decay enzymes and mRNA decay activation stretch occupies residues 1-111 (MTTTLVSATI…QKQPGGGQVN (111 aa)). At Ser54 the chain carries Phosphoserine; by MAPKAPK2. Ser90 bears the Phosphoserine; by PKB/AKT1 mark. Phosphoserine; by PKB/AKT1 and MAPKAPK2 is present on Ser92. The disordered stretch occupies residues 93-113 (EGGERLLPTQKQPGGGQVNSS). C3H1-type zinc fingers lie at residues 114 to 142 (RYKT…HGIH) and 152 to 180 (KYKT…HNAE). Residues 185-338 (LAGARDLSAD…IFSRLSISDD (154 aa)) are necessary for mRNA decay activation. Residue Ser203 is modified to Phosphoserine; by PKB/AKT1 and MAPKAPK2. A disordered region spans residues 273-338 (SPTTFLFRPM…IFSRLSISDD (66 aa)). A compositionally biased stretch (low complexity) spans 296–318 (QDSLSDQEGYLSSSSSSHSGSDS). Ser318 carries the post-translational modification Phosphoserine. Residue Ser334 is modified to Phosphoserine; by RPS6KA1.

As to quaternary structure, associates with the cytoplasmic CCR4-NOT deadenylase and RNA exosome complexes to trigger ARE-containing mRNA deadenylation and decay processes. Interacts with CNOT1. Interacts (via N-terminus) with CNOT6. Interacts with CNOT7; this interaction is inhibited in response to phorbol 12-myristate 13-acetate (PMA) treatment in a p38 MAPK-dependent manner. Interacts with DCP1A. Interacts (via N-terminus) with DCP2. Interacts (via N-terminus) with EXOSC2. Interacts with XRN1. Interacts (via phosphorylated form) with YWHAB; this interaction occurs in a protein kinase AKT1-dependent manner. Interacts (via phosphorylated form) with YWHAZ; this interaction occurs in a p38 MAPK- and AKT-signaling pathways. Phosphorylated. Phosphorylated by RPS6KA1 at Ser-334 upon phorbol 12-myristate 13-acetate (PMA) treatment; this phosphorylation results in dissociation of the CCR4-NOT deadenylase complex and induces p38 MAPK-mediated stabilization of the low-density lipoprotein receptor LDLR mRNA. Phosphorylated by protein kinase AKT1 at Ser-92 and Ser-203 in response to insulin; these phosphorylations stabilize ZFP36L1, increase the association with 14-3-3 proteins and mediate ARE-containing mRNA stabilization. AKT1-mediated phosphorylation at Ser-92 does not impair ARE-containing RNA-binding. Phosphorylated at Ser-54, Ser-92 and Ser-203 by MAPKAPK2; these phosphorylations increase the association with 14-3-3 proteins and mediate ARE-containing mRNA stabilization in a protein kinase AKT1-independent manner. MAPKAPK2-mediated phosphorylations at Ser-54, Ser-92 and Ser-203 do not impair ARE-containing RNA-binding. Phosphorylations increase the association with 14-3-3 proteins and mediate ARE-containing mRNA stabilization during early adipogenesis in a p38 MAPK- and AKT-dependent manner. Post-translationally, ubiquitinated. Ubiquitination leads to proteasomal degradation, a process inhibited by phosphorylations at Ser-90, Ser-92 and Ser-203. Expressed mainly in the basal epidermal layer, weakly in the suprabasal epidermal layers. Expressed in epidermal keratinocytes (at protein level). Expressed in osteoblasts.

It is found in the nucleus. The protein localises to the cytoplasm. The protein resides in the cytoplasmic granule. It localises to the P-body. Functionally, zinc-finger RNA-binding protein that destabilizes several cytoplasmic AU-rich element (ARE)-containing mRNA transcripts by promoting their poly(A) tail removal or deadenylation, and hence provide a mechanism for attenuating protein synthesis. Acts as a 3'-untranslated region (UTR) ARE mRNA-binding adapter protein to communicate signaling events to the mRNA decay machinery. Functions by recruiting the CCR4-NOT deadenylase complex and components of the cytoplasmic RNA decay machinery to the bound ARE-containing mRNAs, and hence promotes ARE-mediated mRNA deadenylation and decay processes. Also induces the degradation of ARE-containing mRNAs even in absence of poly(A) tail. Binds to 3'-UTR ARE of numerous mRNAs. Positively regulates early adipogenesis by promoting ARE-mediated mRNA decay of immediate early genes (IEGs). Promotes ARE-mediated mRNA decay of mineralocorticoid receptor NR3C2 mRNA in response to hypertonic stress. Negatively regulates hematopoietic/erythroid cell differentiation by promoting ARE-mediated mRNA decay of the transcription factor STAT5B mRNA. Positively regulates monocyte/macrophage cell differentiation by promoting ARE-mediated mRNA decay of the cyclin-dependent kinase CDK6 mRNA. Promotes degradation of ARE-containing pluripotency-associated mRNAs in embryonic stem cells (ESCs), such as NANOG, through a fibroblast growth factor (FGF)-induced MAPK-dependent signaling pathway, and hence attenuates ESC self-renewal and positively regulates mesendoderm differentiation. May play a role in mediating pro-apoptotic effects in malignant B-cells by promoting ARE-mediated mRNA decay of BCL2 mRNA. In association with ZFP36L2 maintains quiescence on developing B lymphocytes by promoting ARE-mediated decay of several mRNAs encoding cell cycle regulators that help B cells progress through the cell cycle, and hence ensuring accurate variable-diversity-joining (VDJ) recombination and functional immune cell formation. Together with ZFP36L2 is also necessary for thymocyte development and prevention of T-cell acute lymphoblastic leukemia (T-ALL) transformation by promoting ARE-mediated mRNA decay of the oncogenic transcription factor NOTCH1 mRNA. Participates in the delivery of target ARE-mRNAs to processing bodies (PBs). In addition to its cytosolic mRNA-decay function, plays a role in the regulation of nuclear mRNA 3'-end processing; modulates mRNA 3'-end maturation efficiency of the DLL4 mRNA through binding with an ARE embedded in a weak noncanonical polyadenylation (poly(A)) signal in endothelial cells. Also involved in the regulation of stress granule (SG) and P-body (PB) formation and fusion. Plays a role in vasculogenesis and endocardial development. Plays a role in the regulation of keratinocyte proliferation, differentiation and apoptosis. Plays a role in myoblast cell differentiation. The sequence is that of mRNA decay activator protein ZFP36L1 from Homo sapiens (Human).